The following is a 154-amino-acid chain: Ribonuclease H (154 aa).

The region spanning 1–142 (MKQVDIFTDG…CDTIARGHAS (142 aa)) is the RNase H type-1 domain. Residues Asp-9, Glu-47, Asp-69, and Asp-134 each coordinate Mg(2+).

The protein belongs to the RNase H family. As to quaternary structure, monomer. Mg(2+) is required as a cofactor.

Its subcellular location is the cytoplasm. It carries out the reaction Endonucleolytic cleavage to 5'-phosphomonoester.. Functionally, endonuclease that specifically degrades the RNA of RNA-DNA hybrids. This is Ribonuclease H from Oleidesulfovibrio alaskensis (strain ATCC BAA-1058 / DSM 17464 / G20) (Desulfovibrio alaskensis).